A 116-amino-acid polypeptide reads, in one-letter code: Flagellar transcriptional regulator FlhD (116 aa).

Belongs to the FlhD family. Homodimer; disulfide-linked. Forms a heterohexamer composed of two FlhC and four FlhD subunits. Each FlhC binds a FlhD dimer, forming a heterotrimer, and a hexamer assembles by dimerization of two heterotrimers.

It localises to the cytoplasm. Functionally, functions in complex with FlhC as a master transcriptional regulator that regulates transcription of several flagellar and non-flagellar operons by binding to their promoter region. Activates expression of class 2 flagellar genes, including fliA, which is a flagellum-specific sigma factor that turns on the class 3 genes. Also regulates genes whose products function in a variety of physiological pathways. The polypeptide is Flagellar transcriptional regulator FlhD (Escherichia coli O9:H4 (strain HS)).